A 242-amino-acid chain; its full sequence is MNLRSKVDSQPAYVLHSYPFRETSLIVEVFSRDFGRMALLARGARRPRSAIRGLLMAFQPLEIAWAGKGEVLTLMKAEWQGGLPLLAGEALFCGYYLNELLMHLLPREDAHEQLFASYAKMLALLAADPSGKVREADLRCFEKALLQELGYGLTLNHDSDANLIEPDTFYTYRIEQGPVRIDHGEGATQVVRGKTLLDLDAEDFSDPRTRHEAKALMRMLMAYYLAGKELETRKIFKELQEL.

The protein belongs to the RecO family.

Its function is as follows. Involved in DNA repair and RecF pathway recombination. The polypeptide is DNA repair protein RecO (Dechloromonas aromatica (strain RCB)).